The sequence spans 432 residues: Probable anion transporter 5 (432 aa).

The first 23 residues, 1 to 23 (MKLSNIPQRYVIVFLTFLSTCVC), serve as a signal peptide directing secretion. The next 11 membrane-spanning stretches (helical) occupy residues 50 to 70 (TILS…GWAA), 78 to 98 (VLLL…LDPN), 101 to 121 (GLLV…FPSI), 140 to 160 (ITTS…PALV), 164 to 184 (GPES…LLWI), 229 to 249 (LPVW…YVLM), 273 to 293 (VPYL…DYLI), 305 to 325 (KFLN…LPMF), 331 to 351 (VILC…GFAV), 360 to 380 (YAGI…IIGV), and 405 to 425 (VVFF…LLFS).

It belongs to the major facilitator superfamily. Sodium/anion cotransporter (TC 2.A.1.14) family. In terms of tissue distribution, ubiquitous.

Its subcellular location is the golgi apparatus membrane. Functionally, inorganic phosphate and probable anion transporter. This chain is Probable anion transporter 5 (ANTR5), found in Arabidopsis thaliana (Mouse-ear cress).